Reading from the N-terminus, the 427-residue chain is Dihydroorotase (427 aa).

Positions 58 and 60 each coordinate Zn(2+). Substrate contacts are provided by residues 60-62 (HYR) and N92. Zn(2+) is bound by residues D150, H177, and H230. N276 is a binding site for substrate. D303 provides a ligand contact to Zn(2+). D303 is a catalytic residue. Substrate is bound by residues H307 and 321-322 (FG).

This sequence belongs to the metallo-dependent hydrolases superfamily. DHOase family. Class I DHOase subfamily. Zn(2+) serves as cofactor.

It catalyses the reaction (S)-dihydroorotate + H2O = N-carbamoyl-L-aspartate + H(+). Its pathway is pyrimidine metabolism; UMP biosynthesis via de novo pathway; (S)-dihydroorotate from bicarbonate: step 3/3. Functionally, catalyzes the reversible cyclization of carbamoyl aspartate to dihydroorotate. This chain is Dihydroorotase, found in Lactobacillus leichmannii.